A 168-amino-acid chain; its full sequence is Photosystem I assembly protein Ycf3 (168 aa).

TPR repeat units lie at residues 35–68 (AFTYYRDGMSAQSEGNYAEALQNYYEAMRLEIDP), 72–105 (SYILYNIGLIHTSNGEHTKALEYYFRALERNPFL), and 120–153 (GEQAIRQGDSEIAEAWFDQAAEYWKQAIALTPGN).

It belongs to the Ycf3 family.

It is found in the plastid. The protein resides in the chloroplast thylakoid membrane. Essential for the assembly of the photosystem I (PSI) complex. May act as a chaperone-like factor to guide the assembly of the PSI subunits. This chain is Photosystem I assembly protein Ycf3, found in Lactuca sativa (Garden lettuce).